The following is a 462-amino-acid chain: Phospho-2-dehydro-3-deoxyheptonate aldolase AroG (462 aa).

Cysteine 87 provides a ligand contact to Mn(2+). Phosphoenolpyruvate contacts are provided by residues arginine 126, 283-284, lysine 306, and arginine 337; that span reads ER. Residues histidine 369, glutamate 411, and aspartate 441 each coordinate Mn(2+).

Homodimer. Interacts with Rv0948c. The cofactor is Mn(2+). Co(2+) is required as a cofactor. Cd(2+) serves as cofactor.

The catalysed reaction is D-erythrose 4-phosphate + phosphoenolpyruvate + H2O = 7-phospho-2-dehydro-3-deoxy-D-arabino-heptonate + phosphate. The protein operates within metabolic intermediate biosynthesis; chorismate biosynthesis; chorismate from D-erythrose 4-phosphate and phosphoenolpyruvate: step 1/7. With respect to regulation, feedback inhibited by tryptophan, tyrosine, phenylalanine and chorismate. Its function is as follows. Catalyzes an aldol-like condensation reaction between phosphoenolpyruvate (PEP) and D-erythrose 4-phosphate (E4P) to generate 3-deoxy-D-arabino-heptulosonate 7-phosphate (DAH7P) and inorganic phosphate. This Mycobacterium tuberculosis (strain ATCC 25618 / H37Rv) protein is Phospho-2-dehydro-3-deoxyheptonate aldolase AroG (aroG).